A 412-amino-acid chain; its full sequence is 43 kDa receptor-associated protein of the synapse (412 aa).

Gly-2 carries the N-myristoyl glycine lipid modification. 7 TPR repeats span residues 6 to 39, 83 to 116, 123 to 156, 163 to 196, 206 to 239, 246 to 279, and 286 to 319; these read TKQQ…STEL, TEAY…EGGP, GQVC…AHGN, CRVC…VADY, AMSR…ALQH, ALCL…MTEI, and AHVL…ADAV. Tyr-196 is subject to Phosphotyrosine. Residues 363-403 form an RING-type zinc finger; the sequence is CGLCGESIGDQNSQLQALPCSHLFHLKCLQTNGNRGCPNCK. Ser-405 is subject to Phosphoserine.

The protein belongs to the RAPsyn family.

It is found in the cell membrane. Its subcellular location is the postsynaptic cell membrane. The protein resides in the cytoplasm. The protein localises to the cytoskeleton. In terms of biological role, postsynaptic protein required for clustering of nicotinic acetylcholine receptors (nAChRs) at the neuromuscular junction. It may link the receptor to the underlying postsynaptic cytoskeleton, possibly by direct association with actin or spectrin. The polypeptide is 43 kDa receptor-associated protein of the synapse (RAPSN) (Tetronarce californica (Pacific electric ray)).